The primary structure comprises 120 residues: Synaptobrevin (120 aa).

The interval 1–38 (MSAPPSGPAPDAQGGAPGQPTGPPGAPPNTTSNRRLQQ) is disordered. Topologically, residues 1 to 98 (MSAPPSGPAP…KRKYWWKNCK (98 aa)) are cytoplasmic. Polar residues predominate over residues 29 to 38 (NTTSNRRLQQ). The v-SNARE coiled-coil homology domain occupies 35 to 95 (RLQQTQAQVE…AKLKRKYWWK (61 aa)). The helical; Anchor for type IV membrane protein transmembrane segment at 99–118 (MMIMLGGIGAIIVIVIIIYF) threads the bilayer. Residues 119-120 (FT) are Vesicular-facing.

This sequence belongs to the synaptobrevin family. Nervous system specific.

It is found in the cytoplasmic vesicle. The protein resides in the secretory vesicle. It localises to the synaptic vesicle membrane. The protein localises to the synapse. Its subcellular location is the synaptosome. In terms of biological role, this protein may play a role in packaging, transport or release of neurotransmitters. The protein is Synaptobrevin of Tetronarce californica (Pacific electric ray).